We begin with the raw amino-acid sequence, 320 residues long: Biotin synthase (320 aa).

The Radical SAM core domain occupies 45-274 (NDLQKASLLS…DSRIRLSAGR (230 aa)). Residues cysteine 60, cysteine 64, and cysteine 67 each coordinate [4Fe-4S] cluster. 4 residues coordinate [2Fe-2S] cluster: cysteine 105, cysteine 137, cysteine 197, and arginine 269.

The protein belongs to the radical SAM superfamily. Biotin synthase family. As to quaternary structure, homodimer. The cofactor is [4Fe-4S] cluster. [2Fe-2S] cluster is required as a cofactor.

It catalyses the reaction (4R,5S)-dethiobiotin + (sulfur carrier)-SH + 2 reduced [2Fe-2S]-[ferredoxin] + 2 S-adenosyl-L-methionine = (sulfur carrier)-H + biotin + 2 5'-deoxyadenosine + 2 L-methionine + 2 oxidized [2Fe-2S]-[ferredoxin]. The protein operates within cofactor biosynthesis; biotin biosynthesis; biotin from 7,8-diaminononanoate: step 2/2. Catalyzes the conversion of dethiobiotin (DTB) to biotin by the insertion of a sulfur atom into dethiobiotin via a radical-based mechanism. In Beijerinckia indica subsp. indica (strain ATCC 9039 / DSM 1715 / NCIMB 8712), this protein is Biotin synthase.